The primary structure comprises 610 residues: Zinc metalloproteinase-disintegrin-like 4a (610 aa).

The N-terminal stretch at 1–20 (MIQVLLVTISLAVFPYQGSS) is a signal peptide. Positions 21 to 189 (VILESGNVND…KKASQSNLTP (169 aa)) are excised as a propeptide. A Peptidase M12B domain is found at 199-395 (KYVKLFLVAD…NMPQCILKKP (197 aa)). N-linked (GlcNAc...) asparagine glycosylation is present at asparagine 218. A Ca(2+)-binding site is contributed by aspartate 286. Intrachain disulfides connect cysteine 310/cysteine 390, cysteine 350/cysteine 374, and cysteine 352/cysteine 357. Histidine 335 serves as a coordination point for Zn(2+). Residue glutamate 336 is part of the active site. Zn(2+) contacts are provided by histidine 339 and histidine 345. Ca(2+)-binding residues include cysteine 390, valine 405, asparagine 408, phenylalanine 410, glutamate 412, glutamate 415, and aspartate 418. The 86-residue stretch at 403 to 488 (PAVCGNYFVE…AECTDSFQRN (86 aa)) folds into the Disintegrin domain. Intrachain disulfides connect cysteine 406-cysteine 435, cysteine 417-cysteine 430, cysteine 419-cysteine 425, cysteine 429-cysteine 452, cysteine 443-cysteine 449, cysteine 448-cysteine 474, cysteine 461-cysteine 481, cysteine 468-cysteine 499, cysteine 492-cysteine 504, cysteine 511-cysteine 561, cysteine 526-cysteine 572, cysteine 539-cysteine 549, cysteine 556-cysteine 598, and cysteine 592-cysteine 603. Residues 467 to 469 (ECD) carry the D/ECD-tripeptide motif.

The protein belongs to the venom metalloproteinase (M12B) family. P-III subfamily. Zn(2+) serves as cofactor. Expressed by the venom gland.

It localises to the secreted. In terms of biological role, snake venom metalloproteinase that impairs hemostasis in the envenomed animal. The protein is Zinc metalloproteinase-disintegrin-like 4a of Crotalus adamanteus (Eastern diamondback rattlesnake).